Reading from the N-terminus, the 361-residue chain is Histidinol-phosphate aminotransferase (361 aa).

At Lys-218 the chain carries N6-(pyridoxal phosphate)lysine.

This sequence belongs to the class-II pyridoxal-phosphate-dependent aminotransferase family. Histidinol-phosphate aminotransferase subfamily. In terms of assembly, homodimer. Pyridoxal 5'-phosphate serves as cofactor.

It catalyses the reaction L-histidinol phosphate + 2-oxoglutarate = 3-(imidazol-4-yl)-2-oxopropyl phosphate + L-glutamate. The protein operates within amino-acid biosynthesis; L-histidine biosynthesis; L-histidine from 5-phospho-alpha-D-ribose 1-diphosphate: step 7/9. This chain is Histidinol-phosphate aminotransferase, found in Dinoroseobacter shibae (strain DSM 16493 / NCIMB 14021 / DFL 12).